The following is a 142-amino-acid chain: Acidic phospholipase A2 PA4 (142 aa).

Ca(2+)-binding residues include W10, G12, and G14. Disulfide bonds link C11–C33, C32–C72, and C39–C65. H36 is a catalytic residue. D37 provides a ligand contact to Ca(2+).

Belongs to the phospholipase A2 family. Group III subfamily. The cofactor is Ca(2+). Expressed by the venom gland.

The protein localises to the secreted. The catalysed reaction is a 1,2-diacyl-sn-glycero-3-phosphocholine + H2O = a 1-acyl-sn-glycero-3-phosphocholine + a fatty acid + H(+). Functionally, PLA2 catalyzes the calcium-dependent hydrolysis of the 2-acyl groups in 3-sn-phosphoglycerides. In Heloderma suspectum (Gila monster), this protein is Acidic phospholipase A2 PA4.